A 499-amino-acid polypeptide reads, in one-letter code: Spore germination protein GerQA (499 aa).

3 helical membrane-spanning segments follow: residues 285–305 (LFAF…LTYH), 376–396 (SNVL…APIY), and 409–429 (FIIS…SLLL).

It belongs to the GerABKA family.

Its subcellular location is the membrane. Required for the germination response to inosine. Has no role in L-alanine germination. The sequence is that of Spore germination protein GerQA (gerQA) from Bacillus cereus.